The following is a 481-amino-acid chain: Phospho-2-dehydro-3-deoxyheptonate aldolase (481 aa).

The interval 1–22 is disordered; it reads MSQQTTPNAPGWAPDSWRSKPI.

Belongs to the class-II DAHP synthase family. Homodimer. In terms of processing, the N-terminus is blocked.

The enzyme catalyses D-erythrose 4-phosphate + phosphoenolpyruvate + H2O = 7-phospho-2-dehydro-3-deoxy-D-arabino-heptonate + phosphate. Its pathway is metabolic intermediate biosynthesis; chorismate biosynthesis; chorismate from D-erythrose 4-phosphate and phosphoenolpyruvate: step 1/7. This chain is Phospho-2-dehydro-3-deoxyheptonate aldolase (aro-8), found in Neurospora crassa (strain ATCC 24698 / 74-OR23-1A / CBS 708.71 / DSM 1257 / FGSC 987).